The chain runs to 304 residues: Peroxisomal membrane protein 13 (304 aa).

Disordered regions lie at residues 1–78 and 258–304; these read MASQ…WEQQ and PRKM…VWGN. Composition is skewed to polar residues over residues 19-44 and 56-67; these read NTSG…SGTA and RPNTAANMNSLS. Low complexity predominate over residues 262-279; it reads QQPPQGPNGLPLPHQPHG.

The protein belongs to the peroxin-13 family. In terms of assembly, interacts with PEX14; forming the PEX13-PEX14 docking complex. Interacts (via N-terminus) with PEX7, but not with PEX5. Interacts with APEM9 (via N-terminus). In terms of tissue distribution, highly expressed in pollen. Detected in shoots, roots, stems, leaves, inflorescences and emasculated postils. Strongly expressed in both male and female gametophytes during fertilization.

It is found in the peroxisome membrane. In terms of biological role, component of the PEX13-PEX14 docking complex, a translocon channel that specifically mediates the import of peroxisomal cargo proteins bound to PEX5 receptor. The PEX13-PEX14 docking complex forms a large import pore which can be opened to a diameter of about 9 nm. Mechanistically, PEX5 receptor along with cargo proteins associates with the PEX14 subunit of the PEX13-PEX14 docking complex in the cytosol, leading to the insertion of the receptor into the organelle membrane with the concomitant translocation of the cargo into the peroxisome matrix. Essential for pollen-tube discharge that take place only in the presence of functional peroxisomes in either the male or the female gametophyte. The sequence is that of Peroxisomal membrane protein 13 from Arabidopsis thaliana (Mouse-ear cress).